We begin with the raw amino-acid sequence, 259 residues long: DNA utilization protein HofM (259 aa).

Functionally, required for the use of extracellular DNA as a nutrient. The protein is DNA utilization protein HofM (hofM) of Escherichia coli (strain K12).